Here is a 134-residue protein sequence, read N- to C-terminus: Large ribosomal subunit protein uL22 (134 aa).

This sequence belongs to the universal ribosomal protein uL22 family. As to quaternary structure, part of the 50S ribosomal subunit.

This protein binds specifically to 23S rRNA; its binding is stimulated by other ribosomal proteins, e.g. L4, L17, and L20. It is important during the early stages of 50S assembly. It makes multiple contacts with different domains of the 23S rRNA in the assembled 50S subunit and ribosome. Its function is as follows. The globular domain of the protein is located near the polypeptide exit tunnel on the outside of the subunit, while an extended beta-hairpin is found that lines the wall of the exit tunnel in the center of the 70S ribosome. The chain is Large ribosomal subunit protein uL22 from Karelsulcia muelleri (strain GWSS) (Sulcia muelleri).